Reading from the N-terminus, the 145-residue chain is Large ribosomal subunit protein uL13 (145 aa).

This sequence belongs to the universal ribosomal protein uL13 family. In terms of assembly, part of the 50S ribosomal subunit.

In terms of biological role, this protein is one of the early assembly proteins of the 50S ribosomal subunit, although it is not seen to bind rRNA by itself. It is important during the early stages of 50S assembly. This is Large ribosomal subunit protein uL13 from Bacillus cereus (strain G9842).